The following is a 252-amino-acid chain: Triosephosphate isomerase (252 aa).

10 to 12 (NWK) provides a ligand contact to substrate. His-96 serves as the catalytic Electrophile. Glu-168 acts as the Proton acceptor in catalysis. Substrate is bound by residues Gly-174, Ser-214, and 235 to 236 (GG).

The protein belongs to the triosephosphate isomerase family. As to quaternary structure, homodimer.

It is found in the cytoplasm. The catalysed reaction is D-glyceraldehyde 3-phosphate = dihydroxyacetone phosphate. The protein operates within carbohydrate biosynthesis; gluconeogenesis. Its pathway is carbohydrate degradation; glycolysis; D-glyceraldehyde 3-phosphate from glycerone phosphate: step 1/1. Its function is as follows. Involved in the gluconeogenesis. Catalyzes stereospecifically the conversion of dihydroxyacetone phosphate (DHAP) to D-glyceraldehyde-3-phosphate (G3P). The sequence is that of Triosephosphate isomerase from Streptococcus equi subsp. zooepidemicus (strain MGCS10565).